The primary structure comprises 275 residues: Elongation factor Ts (275 aa).

Positions Thr-76–Val-79 are involved in Mg(2+) ion dislocation from EF-Tu.

This sequence belongs to the EF-Ts family.

It localises to the cytoplasm. Functionally, associates with the EF-Tu.GDP complex and induces the exchange of GDP to GTP. It remains bound to the aminoacyl-tRNA.EF-Tu.GTP complex up to the GTP hydrolysis stage on the ribosome. In Corynebacterium kroppenstedtii (strain DSM 44385 / JCM 11950 / CIP 105744 / CCUG 35717), this protein is Elongation factor Ts.